Consider the following 422-residue polypeptide: Enolase (422 aa).

Glutamine 162 provides a ligand contact to (2R)-2-phosphoglycerate. Glutamate 204 (proton donor) is an active-site residue. Mg(2+) contacts are provided by aspartate 241, glutamate 285, and aspartate 312. Residues lysine 337, arginine 366, serine 367, and lysine 388 each contribute to the (2R)-2-phosphoglycerate site. Lysine 337 (proton acceptor) is an active-site residue.

This sequence belongs to the enolase family. It depends on Mg(2+) as a cofactor.

Its subcellular location is the cytoplasm. It is found in the secreted. The protein resides in the cell surface. The catalysed reaction is (2R)-2-phosphoglycerate = phosphoenolpyruvate + H2O. It functions in the pathway carbohydrate degradation; glycolysis; pyruvate from D-glyceraldehyde 3-phosphate: step 4/5. Functionally, catalyzes the reversible conversion of 2-phosphoglycerate (2-PG) into phosphoenolpyruvate (PEP). It is essential for the degradation of carbohydrates via glycolysis. This is Enolase from Wolinella succinogenes (strain ATCC 29543 / DSM 1740 / CCUG 13145 / JCM 31913 / LMG 7466 / NCTC 11488 / FDC 602W) (Vibrio succinogenes).